Reading from the N-terminus, the 504-residue chain is Maturase K (504 aa).

The protein belongs to the intron maturase 2 family. MatK subfamily.

It localises to the plastid. Its subcellular location is the chloroplast. Its function is as follows. Usually encoded in the trnK tRNA gene intron. Probably assists in splicing its own and other chloroplast group II introns. The chain is Maturase K from Chimaphila umbellata (Pipsissewa).